The following is a 200-amino-acid chain: Recombination protein RecR (200 aa).

A C4-type zinc finger spans residues 58–73 (CSLCCNLTDEDPCSIC). Positions 81–176 (NLLCVVEEPR…KVTRIAHGIP (96 aa)) constitute a Toprim domain.

The protein belongs to the RecR family.

Functionally, may play a role in DNA repair. It seems to be involved in an RecBC-independent recombinational process of DNA repair. It may act with RecF and RecO. This is Recombination protein RecR from Desulforamulus reducens (strain ATCC BAA-1160 / DSM 100696 / MI-1) (Desulfotomaculum reducens).